Reading from the N-terminus, the 255-residue chain is Coniferyl-alcohol dehydrogenase (255 aa).

NAD(+) contacts are provided by residues 12 to 17, D36, 51 to 52, and G77; these read GVSSGI and DL. S117 serves as a coordination point for substrate. Residues Y157 and K161 each coordinate NAD(+). Y157 (proton acceptor) is an active-site residue.

This sequence belongs to the short-chain dehydrogenases/reductases (SDR) family.

The enzyme catalyses (E)-coniferol + NADP(+) = (E)-coniferaldehyde + NADPH + H(+). In terms of biological role, catalyzes the conversion of coniferyl alcohol into coniferyl aldehyde in the eugenol degradation pathway. Specific for coniferyl alcohol; does not act on cinnamyl alcohol, 4-coumaryl alcohol or sinapyl alcohol. This chain is Coniferyl-alcohol dehydrogenase (calA), found in Pseudomonas sp. (strain HR199 / DSM 7063).